We begin with the raw amino-acid sequence, 130 residues long: Large ribosomal subunit protein bL21 (130 aa).

Residues 110-130 (TAPTATEETADATPDTETAAE) form a disordered region.

The protein belongs to the bacterial ribosomal protein bL21 family. As to quaternary structure, part of the 50S ribosomal subunit. Contacts protein L20.

In terms of biological role, this protein binds to 23S rRNA in the presence of protein L20. This is Large ribosomal subunit protein bL21 from Nostoc sp. (strain PCC 7120 / SAG 25.82 / UTEX 2576).